The sequence spans 431 residues: Serine/threonine-protein kinase Sgk1 (431 aa).

The tract at residues 1–60 (MTVKTEAARGPLTYSRMRGMVAILIAFMKQRRMGLNDFIQKIANNSYACKHTEVQSILKI) is necessary for localization to the mitochondria. The disordered stretch occupies residues 66–92 (PELMNANPSPPPSPSQQINLGPSSNPH). A Phosphoserine modification is found at Ser-74. Ser-78 bears the Phosphoserine; by MAPK7 mark. Over residues 81–91 (QQINLGPSSNP) the composition is skewed to polar residues. Positions 98-355 (FHFLKVIGKG…FMEIRNHVFF (258 aa)) constitute a Protein kinase domain. Residues 104-112 (IGKGSFGKV) and Lys-127 each bind ATP. The Nuclear localization signal motif lies at 131 to 141 (KKAILKKKEEK). Catalysis depends on Asp-222, which acts as the Proton acceptor. Position 256 is a phosphothreonine; by PDPK1 (Thr-256). Positions 356–431 (SLINWDDLIN…SYAPPMDSFL (76 aa)) constitute an AGC-kinase C-terminal domain. At Thr-369 the chain carries Phosphothreonine; by PKA. Residues Ser-397, Ser-401, and Ser-422 each carry the phosphoserine modification.

Belongs to the protein kinase superfamily. AGC Ser/Thr protein kinase family. In terms of assembly, homodimer; disulfide-linked. Forms a trimeric complex with FBXW7 and NOTCH1. Interacts with MAPK3/ERK1, MAPK1/ERK2, MAP2K1/MEK1, MAP2K2/MEK2, NEDD4, NEDD4L, MAPT/TAU, MAPK7, CREB1, SLC9A3R2/NHERF2 and KCNJ1/ROMK1. Associates with the mammalian target of rapamycin complex 2 (mTORC2) via an interaction with MAPKAP1/SIN1. Post-translationally, regulated by phosphorylation. Activated by phosphorylation on Ser-422 by mTORC2, transforming it into a substrate for PDPK1 which phosphorylates it on Thr-256. Phosphorylation on Ser-397 and Ser-401 are also essential for its activity. Phosphorylation on Ser-78 by MAPK7 is required for growth factor-induced cell cycle progression. Ubiquitinated by NEDD4L; which promotes proteasomal degradation. Ubiquitinated by SYVN1 at the endoplasmic reticulum; which promotes rapid proteasomal degradation and maintains a high turnover rate in resting cells.

The protein resides in the cytoplasm. It localises to the nucleus. Its subcellular location is the endoplasmic reticulum membrane. It is found in the cell membrane. The protein localises to the mitochondrion. The catalysed reaction is L-seryl-[protein] + ATP = O-phospho-L-seryl-[protein] + ADP + H(+). It carries out the reaction L-threonyl-[protein] + ATP = O-phospho-L-threonyl-[protein] + ADP + H(+). Its activity is regulated as follows. Two specific sites, one in the kinase domain (Thr-256) and the other in the C-terminal regulatory region (Ser-422), need to be phosphorylated for its full activation. Phosphorylation at Ser-397 and Ser-401 are also essential for its activity. Activated by WNK1, WNK2, WNK3 and WNK4; which promote phosphorylation by mTORC2. In terms of biological role, serine/threonine-protein kinase which is involved in the regulation of a wide variety of ion channels, membrane transporters, cellular enzymes, transcription factors, neuronal excitability, cell growth, proliferation, survival, migration and apoptosis. Plays an important role in cellular stress response. Contributes to regulation of renal Na(+) retention, renal K(+) elimination, salt appetite, gastric acid secretion, intestinal Na(+)/H(+) exchange and nutrient transport, insulin-dependent salt sensitivity of blood pressure, salt sensitivity of peripheral glucose uptake, cardiac repolarization and memory consolidation. Up-regulates Na(+) channels: SCNN1A/ENAC, SCN5A and ASIC1/ACCN2, K(+) channels: KCNJ1/ROMK1, KCNA1-5, KCNQ1-5 and KCNE1, epithelial Ca(2+) channels: TRPV5 and TRPV6, chloride channels: BSND, CLCN2 and CFTR, glutamate transporters: SLC1A3/EAAT1, SLC1A2 /EAAT2, SLC1A1/EAAT3, SLC1A6/EAAT4 and SLC1A7/EAAT5, amino acid transporters: SLC1A5/ASCT2, SLC38A1/SN1 and SLC6A19, creatine transporter: SLC6A8, Na(+)/dicarboxylate cotransporter: SLC13A2/NADC1, Na(+)-dependent phosphate cotransporter: SLC34A2/NAPI-2B, glutamate receptor: GRIK2/GLUR6. Up-regulates carriers: SLC9A3/NHE3, SLC12A1/NKCC2, SLC12A3/NCC, SLC5A3/SMIT, SLC2A1/GLUT1, SLC5A1/SGLT1 and SLC15A2/PEPT2. Regulates enzymes: GSK3A/B, PMM2 and Na(+)/K(+) ATPase, and transcription factors: CTNNB1 and nuclear factor NF-kappa-B. Stimulates sodium transport into epithelial cells by enhancing the stability and expression of SCNN1A/ENAC. This is achieved by phosphorylating the NEDD4L ubiquitin E3 ligase, promoting its interaction with 14-3-3 proteins, thereby preventing it from binding to SCNN1A/ENAC and targeting it for degradation. Regulates store-operated Ca(+2) entry (SOCE) by stimulating ORAI1 and STIM1. Regulates KCNJ1/ROMK1 directly via its phosphorylation or indirectly via increased interaction with SLC9A3R2/NHERF2. Phosphorylates MDM2 and activates MDM2-dependent ubiquitination of p53/TP53. Phosphorylates MAPT/TAU and mediates microtubule depolymerization and neurite formation in hippocampal neurons. Phosphorylates SLC2A4/GLUT4 and up-regulates its activity. Phosphorylates APBB1/FE65 and promotes its localization to the nucleus. Phosphorylates MAPK1/ERK2 and activates it by enhancing its interaction with MAP2K1/MEK1 and MAP2K2/MEK2. Phosphorylates FBXW7 and plays an inhibitory role in the NOTCH1 signaling. Phosphorylates FOXO1 resulting in its relocalization from the nucleus to the cytoplasm. Phosphorylates FOXO3, promoting its exit from the nucleus and interference with FOXO3-dependent transcription. Phosphorylates BRAF and MAP3K3/MEKK3 and inhibits their activity. Phosphorylates SLC9A3/NHE3 in response to dexamethasone, resulting in its activation and increased localization at the cell membrane. Phosphorylates CREB1. Necessary for vascular remodeling during angiogenesis. In Oryctolagus cuniculus (Rabbit), this protein is Serine/threonine-protein kinase Sgk1 (SGK1).